The primary structure comprises 107 residues: Phycocyanobilin lyase subunit beta (107 aa).

The protein belongs to the CpcE/RpcE/PecE family. CpcE and CpcF associate to form a lyase.

Required for the chromophorylation of the CpcA gene product. The polypeptide is Phycocyanobilin lyase subunit beta (cpcF) (Mastigocladus laminosus (Fischerella sp.)).